The primary structure comprises 595 residues: MEFLCLAPTRSFSTNPKLTKSIPSDHTSTTSRIFTYQNMRGSTMRPLALPLKMSPIVSVPDITAPVENVPAILPKVVPGELIVNKPTGGDSDELFQYLVDILASPVYDVAIESPLELAEKLSDRLGVNFYIKREDKQRVFSFKLRGAYNMMSNLSREELDKGVITASAGNHAQGVALAGQRLNCVAKIVMPTTTPQIKIDAVRALGGDVVLYGKTFDEAQTHALELSEKDGLKYIPPFDDPGVIKGQGTIGTEINRQLKDIHAVFIPVGGGGLIAGVATFFKQIAPNTKIIGVEPYGAASMTLSLHEGHRVKLSNVDTFADGVAVALVGEYTFAKCQELIDGMVLVANDGISAAIKDVYDEGRNILETSGAVAIAGAAAYCEFYKIKNENIVAIASGANMDFSKLHKVTELAGLGSGKEALLATFMVEQQGSFKTFVGLVGSLNFTELTYRFTSERKNALILYRVNVDKESDLEKMIEDMKSSNMTTLNLSHNELVVDHLKHLVGGSANISDEIFGEFIVPEKAETLKTFLDAFSPRWNITLCRYRNQGDINASLLMGFQVPQAEMDEFKNQADKLGYPYELDNYNEAFNLVVSE.

The transit peptide at 1–51 (MEFLCLAPTRSFSTNPKLTKSIPSDHTSTTSRIFTYQNMRGSTMRPLALPL) directs the protein to the chloroplast. At lysine 143 the chain carries N6-(pyridoxal phosphate)lysine. 2 consecutive ACT-like domains span residues 420–492 (ALLA…NLSH) and 514–585 (IFGE…LDNY).

Belongs to the serine/threonine dehydratase family. Homotetramer. Requires pyridoxal 5'-phosphate as cofactor. In terms of processing, proteolytically cleaved by a chymotrypsin-like digestive protease in the midgut of the lepidopteran insects to remove the C-terminal regulatory domain, which allows efficient metabolizing of threonine in the presence of high isoleucine levels in the gut. As to expression, expressed in floral buds, 8-9 mm long flowers 1 to 2 days before anthesis, open flowers and floral organs including sepals, petals, stamens and carpels of 8-9 mm flowers (at protein level). Expressed in very early floral meristems of the anantha. Over 500-fold expression in mature flowers compared to leaves. Expressed in sepals, petals, stamens and carpels of the mature flower. In sepals, mostly expressed in the abaxial mesophyll cells and in petals in parenchymal cells. Not expressed in epidermal or vascular tissues of sepals and petals. In stamens, expressed in parenchymal cells of the connective and lobes, but not expressed in differentiated tissues such as tapetum (TP), stomium (SM), or pollen grains (PG). Not expressed in roots or seeds. High level of expression in immature flower buds, unopened flowers and opened flowers. Not expressed in unstressed leaves, root, stem or petiole.

Its subcellular location is the plastid. It localises to the chloroplast. The enzyme catalyses L-threonine = 2-oxobutanoate + NH4(+). It catalyses the reaction L-serine = pyruvate + NH4(+). It functions in the pathway amino-acid biosynthesis; L-isoleucine biosynthesis; 2-oxobutanoate from L-threonine: step 1/1. With respect to regulation, threonine dehydratase 2 biosynthetic, chloroplastic: Strongly inhibited by 1 mM isoleucine. Processed threonine dehydratase 2: Not inhibited by isoleucine. Its function is as follows. Not required for normal growth and development of the plant. Functionally, involved in defense against lepidopteran, but not coleopteran herbivore insects. Acts in the insect gut to degrade threonine, which is an essential and limiting nutrient for the growth of lepidopteran larvae. Active against both L-threonine and L-serine. The sequence is that of Threonine dehydratase 2 biosynthetic, chloroplastic from Solanum lycopersicum (Tomato).